The primary structure comprises 265 residues: AT-hook motif nuclear-localized protein 18 (265 aa).

The interval 1–75 (MDEVSRSHTP…AGSKNKPKAP (75 aa)) is disordered. Positions 19-30 (HYHHQNAGRQKR) are enriched in basic residues. A DNA-binding region (a.T hook) is located at residues 59 to 71 (RRPRGRPAGSKNK). Residues 83 to 217 (ANAFRCHVME…EEEETEREID (135 aa)) enclose the PPC domain.

Its subcellular location is the nucleus. In terms of biological role, transcription factor that specifically binds AT-rich DNA sequences related to the nuclear matrix attachment regions (MARs). Acts redundantly with AHL22, AHL27 and AHL29 in the regulation of flowering and regulation of the hypocotyl elongation. The protein is AT-hook motif nuclear-localized protein 18 of Arabidopsis thaliana (Mouse-ear cress).